Here is a 410-residue protein sequence, read N- to C-terminus: MRYAVYLAPPPASRFWQLGSAWLGRDAWLNRPVALPSGWSAADADRVAAAARYGWHATLRAPFALAEGASEAAVHATLRTLARRFATFGLTLAPATLNGFAALRPVSGQSQVAELATAALLALDALAAPAPLRTGLSAREAELCRRWGYPYVFECYRCHFTLTSQLDEVDIPSWLARAAAHFDGALYQPVEGLALFVEPEAGAAFRLCRLVWLLMAGSTSMRTETGQLIYVMGPSGAGKDSLLGYARERLAGQPLVFAHRYITRPATAGSENHVALSEAEFALREAHGCFALSWRRNGLAYGLGCEVTDWLAAGLVVVVNGSRAALPQARQCFPGLKPLWITASPAVLAARLAARGRESADDIAARLAASAGFRPPADCRVLCNDGELAVAGDELVAWLSSHCHQPITAL.

The tract at residues 1–220 (MRYAVYLAPP…VWLLMAGSTS (220 aa)) is unknown. The interval 221-410 (MRTETGQLIY…SHCHQPITAL (190 aa)) is ribose 1,5-bisphosphokinase. Position 233 to 240 (233 to 240 (GPSGAGKD)) interacts with ATP.

The protein in the C-terminal section; belongs to the ribose 1,5-bisphosphokinase family.

It carries out the reaction alpha-D-ribose 1,5-bisphosphate + ATP = 5-phospho-alpha-D-ribose 1-diphosphate + ADP. It participates in metabolic intermediate biosynthesis; 5-phospho-alpha-D-ribose 1-diphosphate biosynthesis; 5-phospho-alpha-D-ribose 1-diphosphate from D-ribose 5-phosphate (route II): step 3/3. Functionally, catalyzes the phosphorylation of ribose 1,5-bisphosphate to 5-phospho-D-ribosyl alpha-1-diphosphate (PRPP). This is Ribose 1,5-bisphosphate phosphokinase PhnN (phnN) from Laribacter hongkongensis (strain HLHK9).